The following is a 512-amino-acid chain: MGSLPTNNLESISLCSQNPLDPDEFRRQGHMIIDFLADYYKNVEKYPVRSQVEPGYLKKRLPESAPYNPESIETILEDVTNDIIPGLTHWQSPNYFAYFPSSGSIAGFLGEMLSTGFNVVGFNWMSSPAATELESIVMNWLGQMLTLPKSFLFSSDGSSGGGGVLQGTTCEAILCTLTAARDKMLNKIGRENINKLVVYASDQTHCALQKAAQIAGINPKNVRAIKTSKATNFGLSPNSLQSAILADIESGLVPLFLCATVGTTSSTAVDPIGPLCAVAKLYGIWVHIDAAYAGSACICPEFRHFIDGVEDADSFSLNAHKWFFTTLDCCCLWVKDSDSLVKALSTSPEYLKNKATESKQVIDYKDWQIALSRRFRSMKLWLVLRSYGVANLRTFLRSHVKMAKHFQGLIGMDNRFEIVVPRTFAMVCFRLKPTAIFKQKIVDNDYIEDQTNEVNVKLLESVNASGKIYMTHAVVGGVYMIRFAVGATLTEERHVTGAWKVVQEHTDAILGA.

Positions 100, 205, and 320 each coordinate L-tyrosine. Position 321 is an N6-(pyridoxal phosphate)lysine (lysine 321). Residue tyrosine 350 coordinates L-tyrosine.

It belongs to the group II decarboxylase family. In terms of assembly, homodimer. The cofactor is pyridoxal 5'-phosphate. As to expression, mainly expressed in roots, stems and capsule walls.

The catalysed reaction is L-tyrosine + H(+) = tyramine + CO2. Its function is as follows. Tyrosine decarboxylase that converts tyrosine into tyramine, a precursor of isoquinoline alkaloids and various amides. The polypeptide is Tyrosine decarboxylase (Papaver somniferum (Opium poppy)).